The chain runs to 234 residues: UPF0173 metal-dependent hydrolase RL2074 (234 aa).

Belongs to the UPF0173 family.

The polypeptide is UPF0173 metal-dependent hydrolase RL2074 (Rhizobium johnstonii (strain DSM 114642 / LMG 32736 / 3841) (Rhizobium leguminosarum bv. viciae)).